We begin with the raw amino-acid sequence, 246 residues long: Probable transcriptional regulatory protein CKO_01097 (246 aa).

The segment at 1–20 (MAGHSKWANTRHRKAAQDAK) is disordered.

Belongs to the TACO1 family.

The protein resides in the cytoplasm. The polypeptide is Probable transcriptional regulatory protein CKO_01097 (Citrobacter koseri (strain ATCC BAA-895 / CDC 4225-83 / SGSC4696)).